A 162-amino-acid chain; its full sequence is Large ribosomal subunit protein uL22c (162 aa).

It belongs to the universal ribosomal protein uL22 family. In terms of assembly, part of the 50S ribosomal subunit.

It is found in the plastid. It localises to the chloroplast. Functionally, this protein binds specifically to 23S rRNA. In terms of biological role, the globular domain of the protein is located near the polypeptide exit tunnel on the outside of the subunit, while an extended beta-hairpin is found that lines the wall of the exit tunnel in the center of the 70S ribosome. This Cucumis sativus (Cucumber) protein is Large ribosomal subunit protein uL22c (rpl22).